The primary structure comprises 3515 residues: Microtubule-actin cross-linking factor 1, isoforms 6/7 (3515 aa).

7 disordered regions span residues 1–23 (MGKPLSRPDCLRRNPSCLGKGEE), 108–136 (VQKSAPVPPRRRPNAERKDNVNRRSWKSF), 155–196 (VSEA…TLEH), 965–1178 (TEED…AVPT), 1217–1298 (SPAA…SPAA), 1710–1730 (EELATSGGQSPTGEQIPQFQQ), and 3078–3108 (PTHAPFIEKSRSGGRKSLSQPTPPPMPILSQ). The span at 120–129 (PNAERKDNVN) shows a compositional bias: basic and acidic residues. The 13 X 13 AA approximate tandem repeat of P-T-S-P-A-A-A-V-P-T-P-E-E stretch occupies residues 157–245 (EAGASNPSLQ…ESEAVATSGN (89 aa)). Composition is skewed to low complexity over residues 995–1031 (STPEEPASPAAAVPTPEEPTSPAAAVPTPEEPTSPAA) and 1040–1139 (TSPA…AVPT). Tandem repeats lie at residues 1012-1024 (EPTSPAAAVPTPE), 1026-1037 (PTSPAAAVPPPE), 1038-1051 (EPTSPAAAVPTPEE), 1052-1064 (PTSPAAAVPTPEE), 1065-1077 (PTSPAAAVPTPEE), 1078-1090 (PTSPAAAVPTPEE), 1091-1103 (PTSPAAAVPTPEE), 1104-1116 (PTSPAAAVPTPEE), 1117-1129 (PASPAAAVPTPEE), 1130-1142 (PASPAAAVPTPEE), 1143-1155 (PAFPAPAVPTPEE), 1156-1168 (SASAAVAVPTPEE), and 1169-1178 (SASPAAAVPT). The segment covering 1140 to 1151 (PEEPAFPAPAVP) has biased composition (pro residues). Composition is skewed to low complexity over residues 1162-1178 (AVPTPEESASPAAAVPT) and 1268-1298 (SSPAASVPTPEEPASPAAAVSNLEEPASPAA). Polar residues predominate over residues 1715-1730 (SGGQSPTGEQIPQFQQ). 2 consecutive EF-hand domains span residues 3168–3203 (HKKSRVMDFFRRIDKDQDGKITRQEFIDGILASKFP) and 3204–3239 (TTKLEMTAVADIFDRDGDGYIDYYEFVAALHPNKDA). Ca(2+) is bound by residues Asp3181, Asp3183, Asp3185, Lys3187, Glu3192, Asp3217, Asp3219, Asp3221, Tyr3223, and Glu3228. The region spanning 3244–3316 (TDADKIEDEV…EFLVKNDPCR (73 aa)) is the GAR domain. The tract at residues 3332–3515 (PEGASQGMTP…ASPRTPGPKR (184 aa)) is disordered. A compositionally biased stretch (low complexity) spans 3352–3386 (SSRAASPTRSSSSASQSNHSCTSMPSSPATPASGT). A compositionally biased stretch (polar residues) spans 3402–3426 (TFHSSRTSLAGDTSNSSSPASTGAK). Residues 3437 to 3451 (SRPGSRAGSRAGSRA) are compositionally biased toward low complexity. The span at 3466-3488 (ETQSACSDTSESSAAGGQGNSRR) shows a compositional bias: polar residues.

The protein localises to the cytoplasm. It is found in the cytoskeleton. The sequence is that of Microtubule-actin cross-linking factor 1, isoforms 6/7 from Homo sapiens (Human).